Consider the following 4814-residue polypeptide: Nonribosomal peptide synthetase SIDC (4814 aa).

The tract at residues 21-453 (PGPTLLHQLV…MKTSGCHGAA (433 aa)) is adenylation 1. One can recognise a Carrier 1 domain in the interval 528 to 601 (DLKKSTEPEL…HLVSSIKIID (74 aa)). S562 carries the post-translational modification O-(pantetheine 4'-phosphoryl)serine. The segment at 637 to 1045 (VQDIIPCTNL…SLLESMRSME (409 aa)) is condensation 1. The adenylation 2 stretch occupies residues 1101–1488 (TYTDLNRNAN…SRVSSATAAV (388 aa)). 2 consecutive Carrier domains span residues 1589 to 1666 (EDWN…HSSH) and 2134 to 2210 (SSWT…FENG). O-(pantetheine 4'-phosphoryl)serine occurs at positions 1626 and 2171. Condensation regions lie at residues 1706–2210 (LQEA…FENG) and 2243–2649 (LPCT…HQHD). Positions 2709–3100 (TFAQLNSIGN…IRSVKNIHDV (392 aa)) are adenylation 3. The Carrier 4 domain maps to 3203–3280 (SKDSAGYQKL…DLAVALSTAS (78 aa)). Residue S3240 is modified to O-(pantetheine 4'-phosphoryl)serine. Residues 3319–3732 (YIYPCSPLQQ…VQVETALVDA (414 aa)) are condensation 4. A Carrier 5 domain is found at 3747–3823 (EVWGPAADVL…YLSSLVMRLT (77 aa)). S3784 carries the post-translational modification O-(pantetheine 4'-phosphoryl)serine. Positions 3857–4258 (DILPTTPLQD…YVLRHAEEDV (402 aa)) are condensation 5. One can recognise a Carrier 6 domain in the interval 4295 to 4368 (NATSLAIRKV…HMAEQVAALG (74 aa)). S4329 is modified (O-(pantetheine 4'-phosphoryl)serine). The tract at residues 4504-4686 (ETLLRLRIHH…HEDMQKITAD (183 aa)) is condensation 6.

It belongs to the NRP synthetase family. Pantetheine 4'-phosphate serves as cofactor.

The protein operates within siderophore biosynthesis. Functionally, nonribosomal peptide synthetase; part of the gene cluster that mediates the biosynthesis of at least 11 siderophores, including beauverichelin A, dimerumic acid (DA), Na-dimethyl coprogen (NADC), eleutherazine B, ferricrocin (FC), fusarinine A, fusarinine C (FsC), metachelin A, mevalonolactone, rhodotorulic acid (RA) and tenellin. This cocktail of siderophores for iron metabolism is essential for virulence, and more specifically for the fungal virulence in penetrating through the host cuticle. Siderophore synthesis is also involved in conidial germination under iron-deficient conditions. SIDC catalyzes the assembly of ferricrocin whereas SIDD catalyzes the assembly of fusarinine C. This chain is Nonribosomal peptide synthetase SIDC, found in Beauveria bassiana (strain ARSEF 2860) (White muscardine disease fungus).